The sequence spans 312 residues: Ribosomal protein L11 methyltransferase (312 aa).

Residues Thr-162, Gly-183, Asp-205, and Asn-248 each contribute to the S-adenosyl-L-methionine site.

It belongs to the methyltransferase superfamily. PrmA family.

It localises to the cytoplasm. The enzyme catalyses L-lysyl-[protein] + 3 S-adenosyl-L-methionine = N(6),N(6),N(6)-trimethyl-L-lysyl-[protein] + 3 S-adenosyl-L-homocysteine + 3 H(+). Functionally, methylates ribosomal protein L11. The sequence is that of Ribosomal protein L11 methyltransferase from Bacillus cereus (strain ATCC 10987 / NRS 248).